A 436-amino-acid polypeptide reads, in one-letter code: Histidine--tRNA ligase 1 (436 aa).

It belongs to the class-II aminoacyl-tRNA synthetase family. Homodimer.

The protein localises to the cytoplasm. The catalysed reaction is tRNA(His) + L-histidine + ATP = L-histidyl-tRNA(His) + AMP + diphosphate + H(+). In Bacillus cereus (strain ATCC 10987 / NRS 248), this protein is Histidine--tRNA ligase 1.